Here is a 298-residue protein sequence, read N- to C-terminus: MSTQPLVITLLGPTASGKTALALELAERLGLPVINVDSRQLYREMDVGTAKPTAEQQARVTHHLLDLRDPNQPITLQEFQAEATPCIERELSERGIALLVGGSGLYLKALTSGLKPPAVGPQPELRKQFSAMGQAVCHPLLAAADPIAAAKISPADVVRTQRALEVLYASGQPMSGQASVEPPPWRILELGLNPTNLRQRINQRTEQLYQDGLVEETQRLADRYGADLPLLQTIGYGEALQINDGSITRQAAIATTCQRTRQFAKRQRTWFRRQHTPQWLSEQDLLTEAMTLIEQHLG.

G12–T19 lines the ATP pocket. A substrate-binding site is contributed by T14–T19. Residues D37–Q40 are interaction with substrate tRNA.

This sequence belongs to the IPP transferase family. In terms of assembly, monomer. Mg(2+) serves as cofactor.

It catalyses the reaction adenosine(37) in tRNA + dimethylallyl diphosphate = N(6)-dimethylallyladenosine(37) in tRNA + diphosphate. Catalyzes the transfer of a dimethylallyl group onto the adenine at position 37 in tRNAs that read codons beginning with uridine, leading to the formation of N6-(dimethylallyl)adenosine (i(6)A). This Synechococcus sp. (strain CC9902) protein is tRNA dimethylallyltransferase.